Reading from the N-terminus, the 688-residue chain is Glycine--tRNA ligase beta subunit (688 aa).

This sequence belongs to the class-II aminoacyl-tRNA synthetase family. As to quaternary structure, tetramer of two alpha and two beta subunits.

Its subcellular location is the cytoplasm. The catalysed reaction is tRNA(Gly) + glycine + ATP = glycyl-tRNA(Gly) + AMP + diphosphate. In Listeria welshimeri serovar 6b (strain ATCC 35897 / DSM 20650 / CCUG 15529 / CIP 8149 / NCTC 11857 / SLCC 5334 / V8), this protein is Glycine--tRNA ligase beta subunit.